The primary structure comprises 459 residues: Ribulose bisphosphate carboxylase large chain (459 aa).

Lys4 carries the N6,N6,N6-trimethyllysine modification. The substrate site is built by Asn113 and Thr163. Lys165 (proton acceptor) is an active-site residue. A substrate-binding site is contributed by Lys167. Mg(2+) contacts are provided by Lys191, Asp193, and Glu194. Lys191 carries the N6-carboxylysine modification. Residue His284 is the Proton acceptor of the active site. Positions 285, 317, and 369 each coordinate substrate.

This sequence belongs to the RuBisCO large chain family. Type I subfamily. Heterohexadecamer of 8 large chains and 8 small chains; disulfide-linked. The disulfide link is formed within the large subunit homodimers. Requires Mg(2+) as cofactor. Post-translationally, the disulfide bond which can form in the large chain dimeric partners within the hexadecamer appears to be associated with oxidative stress and protein turnover.

The protein resides in the plastid. The protein localises to the chloroplast. The catalysed reaction is 2 (2R)-3-phosphoglycerate + 2 H(+) = D-ribulose 1,5-bisphosphate + CO2 + H2O. It carries out the reaction D-ribulose 1,5-bisphosphate + O2 = 2-phosphoglycolate + (2R)-3-phosphoglycerate + 2 H(+). Functionally, ruBisCO catalyzes two reactions: the carboxylation of D-ribulose 1,5-bisphosphate, the primary event in carbon dioxide fixation, as well as the oxidative fragmentation of the pentose substrate in the photorespiration process. Both reactions occur simultaneously and in competition at the same active site. The protein is Ribulose bisphosphate carboxylase large chain of Geum quellyon (Chilean avens).